Reading from the N-terminus, the 34-residue chain is uncharacterized protein (34 aa).

The helical transmembrane segment at 10–30 (LIITSSFFAIAVVLVLSVLLI) threads the bilayer.

Its subcellular location is the membrane. This is an uncharacterized protein from Shigella flexneri.